Reading from the N-terminus, the 528-residue chain is Probable methylmalonate-semialdehyde/malonate-semialdehyde dehydrogenase [acylating], mitochondrial (528 aa).

A mitochondrion-targeting transit peptide spans methionine 1–leucine 26. Positions 175, 199, 202, and 203 each coordinate NAD(+). The Nucleophile role is filled by cysteine 307. Glutamate 408 serves as a coordination point for NAD(+).

It belongs to the aldehyde dehydrogenase family. In terms of assembly, homotetramer.

It localises to the mitochondrion. It catalyses the reaction 2-methyl-3-oxopropanoate + NAD(+) + CoA + H2O = propanoyl-CoA + hydrogencarbonate + NADH + H(+). The enzyme catalyses 3-oxopropanoate + NAD(+) + CoA + H2O = hydrogencarbonate + acetyl-CoA + NADH + H(+). Its function is as follows. Probable malonate and methylmalonate semialdehyde dehydrogenase involved in the catabolism of valine, thymine, and compounds catabolized by way of beta-alanine, including uracil and cytidine. In Dictyostelium discoideum (Social amoeba), this protein is Probable methylmalonate-semialdehyde/malonate-semialdehyde dehydrogenase [acylating], mitochondrial (mmsdh).